We begin with the raw amino-acid sequence, 152 residues long: Dehydratase aurZ (152 aa).

Residues 34-129 enclose the EthD domain; sequence PSLSEKEYRH…APDHVNFADT (96 aa).

It belongs to the tpcK family.

The catalysed reaction is naphtopyrone YWA1 = norrubrofusarin + H2O + H(+). Its pathway is pigment biosynthesis. Functionally, dehydratase; part of the gene cluster that mediates the biosynthesis of aurofusarin, a red mycelium pigment which is acting as a mycotoxin. The first step is performed by the polyketide synthase which condenses one acetyl-CoA and 6 malonyl-CoA units to form the first intermediate, the cyclic heptaketide and yellow pigment YWA1. The C2 hydroxyl group in the pyrone ring of YWA1 is probably formed during ring closure by an aldol-type cyclization reaction. The dehydratase aurZ then acts as the first tailoring enzyme in the aurofusarin biosynthetic pathway by converting YWA1 to nor-rubrofusarin. Nor-rubrofusarin is then methylated to rubrofusarin by the O-methyltransferase aurJ. Rubrofusarin is then transported across the plasma membrane by the rubrofusarin-specific pump aurT for further enzymatic processing by the extracellular complex composed of GIP1, aurF, aurO and aurS to yield aurofusarin. The chain is Dehydratase aurZ from Gibberella zeae (strain ATCC MYA-4620 / CBS 123657 / FGSC 9075 / NRRL 31084 / PH-1) (Wheat head blight fungus).